Consider the following 93-residue polypeptide: Alpha-elapitoxin-Oh3a (93 aa).

Residues M1 to T21 form the signal peptide. 5 disulfide bridges follow: C24–C42, C35–C63, C48–C52, C67–C78, and C79–C84.

It belongs to the three-finger toxin family. Long-chain subfamily. Type II alpha-neurotoxin sub-subfamily. In terms of tissue distribution, expressed by the venom gland.

The protein localises to the secreted. Functionally, binds to muscular and neuronal nicotinic acetylcholine receptor (nAChR) and inhibits acetylcholine from binding to the receptor, thereby impairing neuromuscular and neuronal transmission. Pseudo-irreversibly inhibits twitches in chick biventer cervicis nerve-muscle preparations in a concentration-dependent manner. The protein is Alpha-elapitoxin-Oh3a of Ophiophagus hannah (King cobra).